Here is a 207-residue protein sequence, read N- to C-terminus: N-(5'-phosphoribosyl)anthranilate isomerase (207 aa).

Belongs to the TrpF family.

It carries out the reaction N-(5-phospho-beta-D-ribosyl)anthranilate = 1-(2-carboxyphenylamino)-1-deoxy-D-ribulose 5-phosphate. It functions in the pathway amino-acid biosynthesis; L-tryptophan biosynthesis; L-tryptophan from chorismate: step 3/5. In Legionella pneumophila (strain Paris), this protein is N-(5'-phosphoribosyl)anthranilate isomerase.